The chain runs to 351 residues: Phosphate acyltransferase (351 aa).

The protein belongs to the PlsX family. Homodimer. Probably interacts with PlsY.

The protein resides in the cytoplasm. It carries out the reaction a fatty acyl-[ACP] + phosphate = an acyl phosphate + holo-[ACP]. The protein operates within lipid metabolism; phospholipid metabolism. Its function is as follows. Catalyzes the reversible formation of acyl-phosphate (acyl-PO(4)) from acyl-[acyl-carrier-protein] (acyl-ACP). This enzyme utilizes acyl-ACP as fatty acyl donor, but not acyl-CoA. The polypeptide is Phosphate acyltransferase (Verminephrobacter eiseniae (strain EF01-2)).